The following is a 98-amino-acid chain: Acylphosphatase (98 aa).

The Acylphosphatase-like domain occupies 12–98 (RLSAWVHGHV…DATMTGFSER (87 aa)). Residues arginine 27 and asparagine 45 contribute to the active site.

This sequence belongs to the acylphosphatase family.

It carries out the reaction an acyl phosphate + H2O = a carboxylate + phosphate + H(+). The sequence is that of Acylphosphatase (acyP) from Mycolicibacterium smegmatis (strain ATCC 700084 / mc(2)155) (Mycobacterium smegmatis).